The sequence spans 965 residues: Phosphoenolpyruvate carboxylase 1 (965 aa).

The residue at position 11 (serine 11) is a Phosphoserine. Residue histidine 172 is part of the active site. D-glucose 6-phosphate-binding residues include tryptophan 283, arginine 450, and aspartate 597. Residue lysine 600 is part of the active site. Position 635 (arginine 635) interacts with D-glucose 6-phosphate. The active site involves arginine 641. Arginine 641 is a binding site for L-aspartate. Threonine 665 serves as a coordination point for D-glucose 6-phosphate. Position 673 (glutamine 673) interacts with L-aspartate. Residues arginine 753 and 767–769 contribute to the D-glucose 6-phosphate site; that span reads RAI. L-aspartate-binding residues include lysine 829, arginine 888, and asparagine 963.

Belongs to the PEPCase type 1 family. Homotetramer. Mg(2+) is required as a cofactor. Expressed in roots and stems and at low levels in leaves. Preferentially expressed in the phloem and in root tips.

The protein localises to the cytoplasm. The catalysed reaction is oxaloacetate + phosphate = phosphoenolpyruvate + hydrogencarbonate. With respect to regulation, activated by the allosteric regulator glucose-6-phosphate. Inhibited by malate and aspartate. Up regulated by light-reversible phosphorylation. In terms of biological role, through the carboxylation of phosphoenolpyruvate (PEP) it forms oxaloacetate, a four-carbon dicarboxylic acid source for the tricarboxylic acid cycle. May be involved in phloem loading with sucrose and in anions and cations uptake and amino acid biosynthesis in roots. This is Phosphoenolpyruvate carboxylase 1 from Flaveria trinervia (Clustered yellowtops).